The sequence spans 200 residues: Anthranilate synthase component 2 (200 aa).

A Glutamine amidotransferase type-1 domain is found at 3–196 (NILLLDNIDS…IHWASLKYIT (194 aa)). Position 57 to 59 (57 to 59 (GPS)) interacts with L-glutamine. The active-site Nucleophile; for GATase activity is Cys-84. L-glutamine is bound by residues Gln-88 and 134–135 (SL). Active-site for GATase activity residues include His-170 and Glu-172.

Heterotetramer consisting of two non-identical subunits: a beta subunit (TrpG) and a large alpha subunit (TrpE).

It carries out the reaction chorismate + L-glutamine = anthranilate + pyruvate + L-glutamate + H(+). Its pathway is amino-acid biosynthesis; L-tryptophan biosynthesis; L-tryptophan from chorismate: step 1/5. Part of a heterotetrameric complex that catalyzes the two-step biosynthesis of anthranilate, an intermediate in the biosynthesis of L-tryptophan. In the first step, the glutamine-binding beta subunit (TrpG) of anthranilate synthase (AS) provides the glutamine amidotransferase activity which generates ammonia as a substrate that, along with chorismate, is used in the second step, catalyzed by the large alpha subunit of AS (TrpE) to produce anthranilate. In the absence of TrpG, TrpE can synthesize anthranilate directly from chorismate and high concentrations of ammonia. The protein is Anthranilate synthase component 2 (trpG) of Buchnera aphidicola subsp. Acyrthosiphon pisum (strain APS) (Acyrthosiphon pisum symbiotic bacterium).